Here is a 546-residue protein sequence, read N- to C-terminus: 2-isopropylmalate synthase (546 aa).

The Pyruvate carboxyltransferase domain occupies 8–271; that stretch reads ILIFDTTLRD…NSFFKRNPDS (264 aa). Mn(2+)-binding residues include Asp17, His208, His210, and Asn244. The tract at residues 408-546 is regulatory domain; that stretch reads QLCLVQVSCG…NKTFLSNPAN (139 aa).

The protein belongs to the alpha-IPM synthase/homocitrate synthase family. LeuA type 1 subfamily. In terms of assembly, homodimer. Requires Mn(2+) as cofactor.

It is found in the cytoplasm. The enzyme catalyses 3-methyl-2-oxobutanoate + acetyl-CoA + H2O = (2S)-2-isopropylmalate + CoA + H(+). It functions in the pathway amino-acid biosynthesis; L-leucine biosynthesis; L-leucine from 3-methyl-2-oxobutanoate: step 1/4. Catalyzes the condensation of the acetyl group of acetyl-CoA with 3-methyl-2-oxobutanoate (2-ketoisovalerate) to form 3-carboxy-3-hydroxy-4-methylpentanoate (2-isopropylmalate). The protein is 2-isopropylmalate synthase of Prochlorococcus marinus (strain MIT 9312).